We begin with the raw amino-acid sequence, 284 residues long: Probable endonuclease 4 (284 aa).

The Zn(2+) site is built by His-69, His-109, Glu-145, Asp-179, His-182, His-216, Asp-229, His-231, and Glu-261.

Belongs to the AP endonuclease 2 family. Zn(2+) is required as a cofactor.

The enzyme catalyses Endonucleolytic cleavage to 5'-phosphooligonucleotide end-products.. In terms of biological role, endonuclease IV plays a role in DNA repair. It cleaves phosphodiester bonds at apurinic or apyrimidinic (AP) sites, generating a 3'-hydroxyl group and a 5'-terminal sugar phosphate. This chain is Probable endonuclease 4, found in Klebsiella pneumoniae subsp. pneumoniae (strain ATCC 700721 / MGH 78578).